Consider the following 124-residue polypeptide: Fluoride-specific ion channel FluC (124 aa).

4 helical membrane-spanning segments follow: residues 1 to 21 (MVPLIVAVSVGGIAGTLLRFA), 38 to 58 (TLAVNIVGCLLIGVLYGLFLI), 69 to 89 (GLMVGFLGGLTTFSSFSLDTV), and 99 to 119 (LALGYAAISVFGGLLATWAGL). Gly76 and Thr79 together coordinate Na(+).

Belongs to the fluoride channel Fluc/FEX (TC 1.A.43) family.

It is found in the cell inner membrane. The catalysed reaction is fluoride(in) = fluoride(out). Na(+) is not transported, but it plays an essential structural role and its presence is essential for fluoride channel function. Functionally, fluoride-specific ion channel. Important for reducing fluoride concentration in the cell, thus reducing its toxicity. The polypeptide is Fluoride-specific ion channel FluC (Pseudomonas fluorescens (strain Pf0-1)).